The primary structure comprises 177 residues: ATP synthase subunit delta (177 aa).

This sequence belongs to the ATPase delta chain family. In terms of assembly, F-type ATPases have 2 components, F(1) - the catalytic core - and F(0) - the membrane proton channel. F(1) has five subunits: alpha(3), beta(3), gamma(1), delta(1), epsilon(1). F(0) has three main subunits: a(1), b(2) and c(10-14). The alpha and beta chains form an alternating ring which encloses part of the gamma chain. F(1) is attached to F(0) by a central stalk formed by the gamma and epsilon chains, while a peripheral stalk is formed by the delta and b chains.

Its subcellular location is the cell inner membrane. F(1)F(0) ATP synthase produces ATP from ADP in the presence of a proton or sodium gradient. F-type ATPases consist of two structural domains, F(1) containing the extramembraneous catalytic core and F(0) containing the membrane proton channel, linked together by a central stalk and a peripheral stalk. During catalysis, ATP synthesis in the catalytic domain of F(1) is coupled via a rotary mechanism of the central stalk subunits to proton translocation. Its function is as follows. This protein is part of the stalk that links CF(0) to CF(1). It either transmits conformational changes from CF(0) to CF(1) or is implicated in proton conduction. The sequence is that of ATP synthase subunit delta from Shewanella baltica (strain OS223).